A 341-amino-acid chain; its full sequence is MALVPKIRNRTISDKPVSSSCTRTSSFRQRLLASCKRFLRFKLLVRASSVSLKKKAARCSQSQQVVKHNDDRIEEHSSSNRGFKDGNNFLVSSTETKKLVAFCGEPFQPLNEEEVALVNSALSKRNRKKILVSHKNSNIDISGETLQCLRPNQWLNDDVTNLYLELLKERQTRDPQKYFKCHFFNTFFYVKLVSGSGYNYKAVSRWTTKRKLGYDLIDCDIIFVPIHIDIHWTLGVINNRERKFVYLDSLFTGVGHTILNAMAKYLVDEVKQKSQKNIDVSSWGMEYVEERPQQQNGYDCGMFMLKYIDFYSRGLSLQFSQKDMPYFRLRTAKEILRLRAD.

Catalysis depends on residues His-231, Asp-248, and Cys-300.

It belongs to the peptidase C48 family.

In terms of biological role, protease that catalyzes two essential functions in the SUMO pathway: processing of full-length SUMOs to their mature forms and deconjugation of SUMO from targeted proteins. This chain is Putative ubiquitin-like-specific protease 1B (ULP1B), found in Arabidopsis thaliana (Mouse-ear cress).